Reading from the N-terminus, the 477-residue chain is Glycogen synthase (477 aa).

An ADP-alpha-D-glucose-binding site is contributed by lysine 15.

Belongs to the glycosyltransferase 1 family. Bacterial/plant glycogen synthase subfamily.

The catalysed reaction is [(1-&gt;4)-alpha-D-glucosyl](n) + ADP-alpha-D-glucose = [(1-&gt;4)-alpha-D-glucosyl](n+1) + ADP + H(+). It participates in glycan biosynthesis; glycogen biosynthesis. Synthesizes alpha-1,4-glucan chains using ADP-glucose. The polypeptide is Glycogen synthase (Shigella boydii serotype 18 (strain CDC 3083-94 / BS512)).